The chain runs to 424 residues: Serine--tRNA ligase (424 aa).

Residues methionine 1–arginine 15 show a composition bias toward basic and acidic residues. A disordered region spans residues methionine 1–valine 27. Threonine 230 to glutamate 232 provides a ligand contact to L-serine. ATP is bound by residues arginine 261–glutamate 263 and valine 277. L-serine is bound at residue glutamate 284. Glutamate 348 to serine 351 lines the ATP pocket. Threonine 382 serves as a coordination point for L-serine.

It belongs to the class-II aminoacyl-tRNA synthetase family. Type-1 seryl-tRNA synthetase subfamily. In terms of assembly, homodimer. The tRNA molecule binds across the dimer.

The protein localises to the cytoplasm. The catalysed reaction is tRNA(Ser) + L-serine + ATP = L-seryl-tRNA(Ser) + AMP + diphosphate + H(+). The enzyme catalyses tRNA(Sec) + L-serine + ATP = L-seryl-tRNA(Sec) + AMP + diphosphate + H(+). It participates in aminoacyl-tRNA biosynthesis; selenocysteinyl-tRNA(Sec) biosynthesis; L-seryl-tRNA(Sec) from L-serine and tRNA(Sec): step 1/1. Functionally, catalyzes the attachment of serine to tRNA(Ser). Is also able to aminoacylate tRNA(Sec) with serine, to form the misacylated tRNA L-seryl-tRNA(Sec), which will be further converted into selenocysteinyl-tRNA(Sec). This chain is Serine--tRNA ligase, found in Cutibacterium acnes (strain DSM 16379 / KPA171202) (Propionibacterium acnes).